Consider the following 305-residue polypeptide: Probable GTP 3',8-cyclase (305 aa).

Residues 6-233 form the Radical SAM core domain; sequence RHGRPVMSLR…MQDRKKYYID (228 aa). R15 serves as a coordination point for GTP. Positions 22 and 26 each coordinate [4Fe-4S] cluster. Position 28 (Y28) interacts with S-adenosyl-L-methionine. C29 provides a ligand contact to [4Fe-4S] cluster. GTP is bound at residue R62. G66 is a binding site for S-adenosyl-L-methionine. GTP is bound at residue T92. An S-adenosyl-L-methionine-binding site is contributed by S116. K153 is a binding site for GTP. Residues C249 and C252 each contribute to the [4Fe-4S] cluster site. 254-256 contributes to the GTP binding site; that stretch reads RLR. C266 is a [4Fe-4S] cluster binding site.

It belongs to the radical SAM superfamily. MoaA family. [4Fe-4S] cluster serves as cofactor.

The catalysed reaction is GTP + AH2 + S-adenosyl-L-methionine = (8S)-3',8-cyclo-7,8-dihydroguanosine 5'-triphosphate + 5'-deoxyadenosine + L-methionine + A + H(+). It functions in the pathway cofactor biosynthesis; molybdopterin biosynthesis. Functionally, catalyzes the cyclization of GTP to (8S)-3',8-cyclo-7,8-dihydroguanosine 5'-triphosphate. In Methanothermobacter thermautotrophicus (strain ATCC 29096 / DSM 1053 / JCM 10044 / NBRC 100330 / Delta H) (Methanobacterium thermoautotrophicum), this protein is Probable GTP 3',8-cyclase.